A 248-amino-acid polypeptide reads, in one-letter code: Triosephosphate isomerase (248 aa).

Asparagine 9–lysine 11 lines the substrate pocket. The Electrophile role is filled by histidine 94. Glutamate 166 acts as the Proton acceptor in catalysis. Substrate-binding positions include glycine 172, serine 212, and glycine 233 to glycine 234.

It belongs to the triosephosphate isomerase family. As to quaternary structure, homodimer.

The protein localises to the cytoplasm. The enzyme catalyses D-glyceraldehyde 3-phosphate = dihydroxyacetone phosphate. It functions in the pathway carbohydrate biosynthesis; gluconeogenesis. It participates in carbohydrate degradation; glycolysis; D-glyceraldehyde 3-phosphate from glycerone phosphate: step 1/1. Functionally, involved in the gluconeogenesis. Catalyzes stereospecifically the conversion of dihydroxyacetone phosphate (DHAP) to D-glyceraldehyde-3-phosphate (G3P). This chain is Triosephosphate isomerase, found in Alkaliphilus oremlandii (strain OhILAs) (Clostridium oremlandii (strain OhILAs)).